Consider the following 980-residue polypeptide: MSVCTLSVPVSSISPGRRCSTFGDAGILGCVSINSNTDEDDVVEGKMVAEGANKETKLPAKKKRKKGLRIKGKRRRKKLILAKKFSKDLGSGRPVADAPASLASGAPEQDEESLFEGNIEKQIYLPSTRAKTSIVWHFFHVDPQYTWRAICNLCEKSVSRGKPGSHLGTSTLQRHLQARHSPHWTRANKFGVTNGEEDFTLDLSLSPPSPGSNGSFEYIPTDSVDENRMGKKRDKSASDALRAKRGRFLIKSNIVKHALIPGTRAKTSAVWNFFYTDPQHISRAVCNICKRSVSRGRPGSHLGTSTLQRHLQATHPIHWAVANKDSGAIGNGLDETETESSDLLNDTMPGEKSSGSQDLTAEDLSDSDTDEPPCLEVENRSESPIPVADQDNPVHAQERETTTHCENAAANQISQAVIQMIVEDLHPYNYFSTPAFQRFLQIVAPDYRLPSETYFFTKAVPQLYDSVREKIFLTLENVQSQKIHLTADIWTHDPSTDYFIVTVHWVSLETASSPSNGGTPNFRKWAVLCVTGLAKDCLITNILQELNDQIGLWLSPNFLTPSFIVSDNSSNVVHAIKGGGFTHVPCFLHCLNIVIQDFFCEHKSIENMLVAARKTCHHFSHSVKARQILQEFQNDHQLPWKNLKQDETGHWISTFYMLKWLLEHCYSVHHSLGRASGVVLTSLQWTLMTYVCDILKPFEEATQRVSVKTTGLNQVLPLIHHLLFSLQRLREDFQVRGITQALNLVDSLSLKLESDALLSAMLKSKHCILATLLDPCFKNSLEDFFPQGADLETYKQILAEEVCNYMESSPGACQISSSETSGPLVRLGTDSFTSIKEGTSSAGSLDSSAAGSVAVGSKSSLLPAAVAVVDEYFKEKYSELSGGDDPLVYWQRKVSIWPALTQVAIQYLSCPMCSWQSECMFTTNSHFHPKQIMNMDFDNIEQLIFLKMNLENVNYDYSTLILSWDPENKAVQSNEKEILP.

The interval 1–89 (MSVCTLSVPV…ILAKKFSKDL (89 aa)) is required for nucleolar localization. The segment at 89-109 (LGSGRPVADAPASLASGAPEQ) is disordered. Residues 130–187 (AKTSIVWHFFHVDPQYTWRAICNLCEKSVSRGKPGSHLGTSTLQRHLQARHSPHWTRA) form a BED-type 1 zinc finger. 4 residues coordinate Zn(2+): Cys151, Cys154, His175, and His180. Residues 201–239 (LDLSLSPPSPGSNGSFEYIPTDSVDENRMGKKRDKSASD) form a disordered region. Positions 203–215 (LSLSPPSPGSNGS) are enriched in low complexity. The BED-type 2 zinc-finger motif lies at 265–322 (AKTSAVWNFFYTDPQHISRAVCNICKRSVSRGRPGSHLGTSTLQRHLQATHPIHWAVA). Positions 286, 289, 310, and 315 each coordinate Zn(2+). The disordered stretch occupies residues 328 to 397 (AIGNGLDETE…ADQDNPVHAQ (70 aa)). Residues 360–373 (TAEDLSDSDTDEPP) show a composition bias toward acidic residues. Ser383 carries the phosphoserine modification. Residues 868 to 950 (VVDEYFKEKY…EQLIFLKMNL (83 aa)) form an HATC (Hobo-Ac-Tam3) domain region.

As to expression, expressed in pancreatic islet cells and weakly expressed in surrounding exocrine tissues (at protein level). Expressed in muscle and brain (at protein level). Shows broad tissue distribution with expression detected in brain, stomach, intestine, heart, kidney, liver, lung, skeletal muscle, ovary, spleen, tail and testis.

The protein localises to the nucleus. It is found in the nucleolus. The protein resides in the cytoplasm. Transcriptional repressor which binds to the consensus sequence 5'-GCTCGC-3', transcription regulation may be tissue-specific. Regulates the expression of target genes such as: IGF2, PGAP6/TMEM8, ENHO, and PIANP. Acts as a transcriptional repressor of growth factor IGF2, thereby negatively regulating postnatal growth of muscles and internal organs, especially in females. Negatively regulates myoblast differentiation and myoblast mitochondrial activity via its regulation of IGF2 transcription. Negatively regulates the cell cycle of myoblasts, potentially via transcriptional regulation of the E2F family of transcription factors such as: E2F1 and E2F2. Positively regulates the cell cycle and survival of pancreatic beta cells. Binds to the CDH2 gene and may directly repress CDH2 transcription. Probably by controlling CDH2 expression, regulates pancreatic beta cell adhesion, and formation of cell-to-cell junctions between pancreatic beta cells and neural crest stem cells. May also play a role in embryonic beta cell differentiation. May play a role in insulin sensitivity and glucose clearance. The protein is Zinc finger BED domain-containing protein 6 of Mus musculus (Mouse).